A 182-amino-acid chain; its full sequence is MPFTSEIISIILLAIGLSMDGFSVSLGLGMQQLRLKRIAYIGLTIGFLHMLMPLAGMLLGQVISEQIGQWTSFAGGVLLFLIGAHMFFSAFRLTEGFRWQPVGVGLWIIAFSVSLDSFTVGLGLGISGVQIFVTLFAFGIVSCFLTWLGMLIGRKVYRFLGVYSELLGGSILCGFGIFILFS.

A run of 6 helical transmembrane segments spans residues 7-27 (IISI…VSLG), 38-58 (IAYI…AGML), 71-91 (TSFA…FSAF), 106-126 (LWII…GLGI), 131-151 (IFVT…LGML), and 159-179 (FLGV…GIFI).

The protein belongs to the MntP (TC 9.B.29) family.

The protein resides in the cell membrane. Its function is as follows. Probably functions as a manganese efflux pump. In Oceanobacillus iheyensis (strain DSM 14371 / CIP 107618 / JCM 11309 / KCTC 3954 / HTE831), this protein is Putative manganese efflux pump MntP.